The chain runs to 197 residues: Guanylyl cyclase-activating protein 2 (197 aa).

A lipid anchor (N-myristoyl glycine) is attached at glycine 2. EF-hand domains lie at aspartate 15 to glutamine 50, glutamate 51 to glycine 86, lysine 87 to leucine 122, and serine 138 to valine 173. Residues aspartate 64, asparagine 66, aspartate 68, threonine 70, glutamate 75, aspartate 100, aspartate 102, asparagine 104, cysteine 106, glutamate 111, aspartate 151, asparagine 153, aspartate 155, glutamine 157, and glutamate 162 each coordinate Ca(2+).

In terms of tissue distribution, low expression in retina.

Stimulates guanylyl cyclase 1 (GC1) and GC2 when free calcium ions concentration is low and inhibits guanylyl cyclases when free calcium ions concentration is elevated. This Ca(2+)-sensitive regulation of guanylyl cyclase (GC) is a key event in recovery of the dark state of rod photoreceptors following light exposure. The chain is Guanylyl cyclase-activating protein 2 (GUCA1B) from Lithobates pipiens (Northern leopard frog).